Reading from the N-terminus, the 533-residue chain is Invertase (533 aa).

Residues 1-22 (MVQVLSVLVIPLLTLFFGYVAS) form the signal peptide. Residues 47–50 (WMND) and Q68 contribute to the substrate site. The active site involves D50. An N-linked (GlcNAc...) asparagine glycan is attached at N72. 110 to 111 (FS) is a binding site for substrate. Residues N119, N120, and N126 are each glycosylated (N-linked (GlcNAc...) asparagine). 178–179 (RD) contacts substrate. N219 carries N-linked (GlcNAc...) asparagine glycosylation. W314 contributes to the substrate binding site. 3 N-linked (GlcNAc...) asparagine glycosylation sites follow: N334, N392, and N419.

Belongs to the glycosyl hydrolase 32 family.

The catalysed reaction is Hydrolysis of terminal non-reducing beta-D-fructofuranoside residues in beta-D-fructofuranosides.. This is Invertase (INV) from Schwanniomyces occidentalis (Yeast).